The following is a 207-amino-acid chain: BON1-associated protein 2 (207 aa).

In terms of domain architecture, C2 spans 1–112 (MSYSTFKRSL…GFAPQGHLNF (112 aa)).

In terms of assembly, interacts with BON1, BON2 and BON3. In terms of tissue distribution, expressed in roots, leaves, stems and flowers.

It localises to the membrane. Negative regulator of cell death and defense responses. Exhibits calcium-dependent phospholipid binding properties. The sequence is that of BON1-associated protein 2 (BAP2) from Arabidopsis thaliana (Mouse-ear cress).